The chain runs to 152 residues: Arginine repressor (152 aa).

The protein belongs to the ArgR family.

It is found in the cytoplasm. It functions in the pathway amino-acid biosynthesis; L-arginine biosynthesis [regulation]. Its function is as follows. Regulates arginine biosynthesis genes. The sequence is that of Arginine repressor from Lactococcus lactis subsp. cremoris (strain MG1363).